The primary structure comprises 202 residues: NAD(P)H dehydrogenase (quinone) (202 aa).

The Flavodoxin-like domain maps to 7 to 193; sequence VLVLYYSMYG…TIARFQGRHF (187 aa). FMN contacts are provided by residues 13–18 and 82–84; these read SMYGHI and TRF. Tyr-15 provides a ligand contact to NAD(+). Substrate is bound at residue Trp-102. Residues 117–122 and His-137 contribute to the FMN site; that span reads STATGG.

This sequence belongs to the WrbA family. Requires FMN as cofactor.

The catalysed reaction is a quinone + NADH + H(+) = a quinol + NAD(+). It catalyses the reaction a quinone + NADPH + H(+) = a quinol + NADP(+). In Rhodospirillum rubrum (strain ATCC 11170 / ATH 1.1.1 / DSM 467 / LMG 4362 / NCIMB 8255 / S1), this protein is NAD(P)H dehydrogenase (quinone).